We begin with the raw amino-acid sequence, 204 residues long: Recombination protein RecR (204 aa).

The C4-type zinc-finger motif lies at 57 to 72; that stretch reads CPTCFNYTDTDICRYC. Residues 80-181 enclose the Toprim domain; it reads ESICVVEEPS…KLSRIAHGVP (102 aa).

The protein belongs to the RecR family.

Its function is as follows. May play a role in DNA repair. It seems to be involved in an RecBC-independent recombinational process of DNA repair. It may act with RecF and RecO. The sequence is that of Recombination protein RecR from Bdellovibrio bacteriovorus (strain ATCC 15356 / DSM 50701 / NCIMB 9529 / HD100).